The sequence spans 457 residues: Asparagine--tRNA ligase (457 aa).

It belongs to the class-II aminoacyl-tRNA synthetase family. In terms of assembly, homodimer.

The protein localises to the cytoplasm. It catalyses the reaction tRNA(Asn) + L-asparagine + ATP = L-asparaginyl-tRNA(Asn) + AMP + diphosphate + H(+). The sequence is that of Asparagine--tRNA ligase from Phytoplasma australiense.